A 211-amino-acid chain; its full sequence is NADH-quinone oxidoreductase subunit I 1 (211 aa).

2 consecutive 4Fe-4S ferredoxin-type domains span residues 50 to 80 (LNRHPDGLEKCVGCELCAWACPADAIYVEGA) and 96 to 125 (RVYQINYARCILCGLCIEACPTRALTMTNE). 8 residues coordinate [4Fe-4S] cluster: C60, C63, C66, C70, C105, C108, C111, and C115. The tract at residues 192–211 (QEGDSTFGATEPASEEVIRR) is disordered.

Belongs to the complex I 23 kDa subunit family. NDH-1 is composed of 14 different subunits. Subunits NuoA, H, J, K, L, M, N constitute the membrane sector of the complex. Requires [4Fe-4S] cluster as cofactor.

It localises to the cell membrane. The enzyme catalyses a quinone + NADH + 5 H(+)(in) = a quinol + NAD(+) + 4 H(+)(out). NDH-1 shuttles electrons from NADH, via FMN and iron-sulfur (Fe-S) centers, to quinones in the respiratory chain. The immediate electron acceptor for the enzyme in this species is believed to be ubiquinone. Couples the redox reaction to proton translocation (for every two electrons transferred, four hydrogen ions are translocated across the cytoplasmic membrane), and thus conserves the redox energy in a proton gradient. This is NADH-quinone oxidoreductase subunit I 1 from Streptomyces coelicolor (strain ATCC BAA-471 / A3(2) / M145).